Reading from the N-terminus, the 455-residue chain is Probable carboxypeptidase MCYG_07204 (455 aa).

The first 21 residues, 1–21, serve as a signal peptide directing secretion; sequence MQKTYLLALLVSSLASVRSLA. N93 carries an N-linked (GlcNAc...) asparagine glycan. D170 is a binding site for Zn(2+). Catalysis depends on E202, which acts as the Proton acceptor. E203 serves as a coordination point for Zn(2+). An N-linked (GlcNAc...) asparagine glycan is attached at N390.

This sequence belongs to the peptidase M20A family. Zn(2+) serves as cofactor.

The protein localises to the secreted. The protein is Probable carboxypeptidase MCYG_07204 of Arthroderma otae (strain ATCC MYA-4605 / CBS 113480) (Microsporum canis).